Reading from the N-terminus, the 396-residue chain is Elongation factor Tu 2 (396 aa).

The tr-type G domain maps to 10-206 (KPHVNVGTIG…ALDTYIPTPK (197 aa)). The tract at residues 19 to 26 (GHVDHGKT) is G1. Residue 19–26 (GHVDHGKT) coordinates GTP. T26 provides a ligand contact to Mg(2+). The tract at residues 60 to 64 (GITIS) is G2. Residues 81 to 84 (DCPG) are G3. GTP is bound by residues 81–85 (DCPGH) and 136–139 (NKAD). The segment at 136-139 (NKAD) is G4. The segment at 174–176 (SAL) is G5.

Belongs to the TRAFAC class translation factor GTPase superfamily. Classic translation factor GTPase family. EF-Tu/EF-1A subfamily. As to quaternary structure, monomer.

Its subcellular location is the cytoplasm. It catalyses the reaction GTP + H2O = GDP + phosphate + H(+). Functionally, GTP hydrolase that promotes the GTP-dependent binding of aminoacyl-tRNA to the A-site of ribosomes during protein biosynthesis. The polypeptide is Elongation factor Tu 2 (Ruthia magnifica subsp. Calyptogena magnifica).